A 142-amino-acid polypeptide reads, in one-letter code: Large ribosomal subunit protein uL11 (142 aa).

The protein belongs to the universal ribosomal protein uL11 family. In terms of assembly, part of the ribosomal stalk of the 50S ribosomal subunit. Interacts with L10 and the large rRNA to form the base of the stalk. L10 forms an elongated spine to which L12 dimers bind in a sequential fashion forming a multimeric L10(L12)X complex. One or more lysine residues are methylated.

Forms part of the ribosomal stalk which helps the ribosome interact with GTP-bound translation factors. This chain is Large ribosomal subunit protein uL11, found in Enterobacter sp. (strain 638).